Reading from the N-terminus, the 328-residue chain is NAD(P)H-dependent pentose reductase (328 aa).

Residue Tyr-50 is the Proton donor of the active site. Residue His-112 coordinates substrate. NAD(+) is bound by residues 174–175, 223–232, and 279–289; these read AN, SSFGPQSFVE, and KSNNVDRLKQN.

The protein belongs to the aldo/keto reductase family.

Pentose reductase with a broad substrate affinity involved in pentose catabolism. Has highest reductase activities with L-arabinose and D-xylose as substrates, and displays much lower activities with D-ribose, D-galactose and D-glucose. Has highest dehydrogenase activity with L-arabitol as substrate, followed by xylitol and D-sorbitol. May be responsible for the first step of the L-arabinose catabolic pathway. The protein is NAD(P)H-dependent pentose reductase (PRD1) of Pyricularia oryzae (strain 70-15 / ATCC MYA-4617 / FGSC 8958) (Rice blast fungus).